A 444-amino-acid polypeptide reads, in one-letter code: S-locus-specific glycoprotein BS29-1 (444 aa).

Positions 1-28 (MRGVIPNYHHSYTLLFFVILVLFPHVFS) are cleaved as a signal peptide. The Bulb-type lectin domain maps to 31-159 (TLSPNEALTI…KTTALDRFMW (129 aa)). N-linked (GlcNAc...) asparagine glycosylation is found at Asn-43, Asn-125, Asn-180, Asn-243, and Asn-396. The PAN domain occupies 356–437 (CGEGDGFLRM…GGQDLYLKVA (82 aa)). 2 disulfide bridges follow: Cys-387–Cys-412 and Cys-395–Cys-397.

Stigma.

Functionally, involved in sporophytic self-incompatibility system (the inability of flowering plants to achieve self-fertilization). This Brassica oleracea var. alboglabra (Chinese kale) protein is S-locus-specific glycoprotein BS29-1 (SLSG).